Reading from the N-terminus, the 274-residue chain is Thymidylate synthase (274 aa).

Residue Arg21 participates in dUMP binding. His51 is a binding site for (6R)-5,10-methylene-5,6,7,8-tetrahydrofolate. 123–124 (RR) serves as a coordination point for dUMP. Cys156 serves as the catalytic Nucleophile. Residues 176–179 (RSAD), Asn187, and 217–219 (HIY) contribute to the dUMP site. Asp179 contacts (6R)-5,10-methylene-5,6,7,8-tetrahydrofolate. Ser273 is a (6R)-5,10-methylene-5,6,7,8-tetrahydrofolate binding site.

This sequence belongs to the thymidylate synthase family. Bacterial-type ThyA subfamily. In terms of assembly, homodimer.

The protein resides in the cytoplasm. It catalyses the reaction dUMP + (6R)-5,10-methylene-5,6,7,8-tetrahydrofolate = 7,8-dihydrofolate + dTMP. The protein operates within pyrimidine metabolism; dTTP biosynthesis. In terms of biological role, catalyzes the reductive methylation of 2'-deoxyuridine-5'-monophosphate (dUMP) to 2'-deoxythymidine-5'-monophosphate (dTMP) while utilizing 5,10-methylenetetrahydrofolate (mTHF) as the methyl donor and reductant in the reaction, yielding dihydrofolate (DHF) as a by-product. This enzymatic reaction provides an intracellular de novo source of dTMP, an essential precursor for DNA biosynthesis. This chain is Thymidylate synthase, found in Francisella philomiragia subsp. philomiragia (strain ATCC 25017 / CCUG 19701 / FSC 153 / O#319-036).